The chain runs to 188 residues: MANSIYNLAHADALPLESGNSILFPPLYDIVWSLIPFLIILIVFWKLVLPKFQEVLTEREDRIKGGIQRAEAAQAEAKAALEKYNAQLAEARTEAAEIREQARERGKQIEAELKDKANEESNRIIESGSKQLLAQREQVVNELRREMGQNSINLAEHLLGDQLSDNVKRSGTIDRFLADLDTVAPNGK.

Residues 30–50 (IVWSLIPFLIILIVFWKLVLP) traverse the membrane as a helical segment.

Belongs to the ATPase B chain family. As to quaternary structure, F-type ATPases have 2 components, F(1) - the catalytic core - and F(0) - the membrane proton channel. F(1) has five subunits: alpha(3), beta(3), gamma(1), delta(1), epsilon(1). F(0) has three main subunits: a(1), b(2) and c(10-14). The alpha and beta chains form an alternating ring which encloses part of the gamma chain. F(1) is attached to F(0) by a central stalk formed by the gamma and epsilon chains, while a peripheral stalk is formed by the delta and b chains.

It localises to the cell membrane. In terms of biological role, f(1)F(0) ATP synthase produces ATP from ADP in the presence of a proton or sodium gradient. F-type ATPases consist of two structural domains, F(1) containing the extramembraneous catalytic core and F(0) containing the membrane proton channel, linked together by a central stalk and a peripheral stalk. During catalysis, ATP synthesis in the catalytic domain of F(1) is coupled via a rotary mechanism of the central stalk subunits to proton translocation. Its function is as follows. Component of the F(0) channel, it forms part of the peripheral stalk, linking F(1) to F(0). This is ATP synthase subunit b from Corynebacterium glutamicum (strain R).